The following is a 374-amino-acid chain: Peptide chain release factor 2 (374 aa).

Gln250 bears the N5-methylglutamine mark.

It belongs to the prokaryotic/mitochondrial release factor family. Post-translationally, methylated by PrmC. Methylation increases the termination efficiency of RF2.

It localises to the cytoplasm. Functionally, peptide chain release factor 2 directs the termination of translation in response to the peptide chain termination codons UGA and UAA. The polypeptide is Peptide chain release factor 2 (Beutenbergia cavernae (strain ATCC BAA-8 / DSM 12333 / CCUG 43141 / JCM 11478 / NBRC 16432 / NCIMB 13614 / HKI 0122)).